A 483-amino-acid polypeptide reads, in one-letter code: Probable ATP-dependent RNA helicase DDX49 (483 aa).

The short motif at 2–30 (AGFAELGLSSWLVEQCRQLGLKQPTPVQL) is the Q motif element. The Helicase ATP-binding domain occupies 33–207 (IPAILEGRDC…GLATNQPFFW (175 aa)). Position 46–53 (46–53 (AKTGSGKT)) interacts with ATP. The DEAD box motif lies at 152 to 155 (DEAD). The 165-residue stretch at 218-382 (QLDQRYLLVP…EFSVEEAEVL (165 aa)) folds into the Helicase C-terminal domain. A disordered region spans residues 444–483 (KEKVEETLKRQKAGRAGHKGRPPRTPSGSHSGPVPSQGLV). A compositionally biased stretch (basic residues) spans 453–465 (RQKAGRAGHKGRP).

Belongs to the DEAD box helicase family. DDX49/DBP8 subfamily.

The protein resides in the nucleus. It is found in the nucleolus. It carries out the reaction ATP + H2O = ADP + phosphate + H(+). Its function is as follows. ATP-dependent RNA helicase that plays a role in various aspects of RNA metabolism including the regulation of mRNA export and the levels of pre-ribosomal RNA. Regulates the stability and synthesis of pre-ribosomal RNA and thereby regulates cell proliferation. Also possesses antiviral activity by recognizing gammaherpesvirus transcripts in the context of lytic reactivation. This chain is Probable ATP-dependent RNA helicase DDX49 (DDX49), found in Homo sapiens (Human).